The primary structure comprises 199 residues: Holliday junction branch migration complex subunit RuvA (199 aa).

Residues 1-64 form a domain I region; the sequence is MIAKLTGRLD…EDFLRLLGFA (64 aa). The segment at 65–143 is domain II; it reads RAEERDWFRL…ALGGISGSGP (79 aa). Residues 144-146 are flexible linker; sequence ALS. Positions 147-199 are domain III; sequence AAAGPVGDAIAALTGLGFKPGEASAAVAAANEELGADASLDALVRVALKKAAK.

It belongs to the RuvA family. As to quaternary structure, homotetramer. Forms an RuvA(8)-RuvB(12)-Holliday junction (HJ) complex. HJ DNA is sandwiched between 2 RuvA tetramers; dsDNA enters through RuvA and exits via RuvB. An RuvB hexamer assembles on each DNA strand where it exits the tetramer. Each RuvB hexamer is contacted by two RuvA subunits (via domain III) on 2 adjacent RuvB subunits; this complex drives branch migration. In the full resolvosome a probable DNA-RuvA(4)-RuvB(12)-RuvC(2) complex forms which resolves the HJ.

It localises to the cytoplasm. Functionally, the RuvA-RuvB-RuvC complex processes Holliday junction (HJ) DNA during genetic recombination and DNA repair, while the RuvA-RuvB complex plays an important role in the rescue of blocked DNA replication forks via replication fork reversal (RFR). RuvA specifically binds to HJ cruciform DNA, conferring on it an open structure. The RuvB hexamer acts as an ATP-dependent pump, pulling dsDNA into and through the RuvAB complex. HJ branch migration allows RuvC to scan DNA until it finds its consensus sequence, where it cleaves and resolves the cruciform DNA. This is Holliday junction branch migration complex subunit RuvA from Sphingopyxis alaskensis (strain DSM 13593 / LMG 18877 / RB2256) (Sphingomonas alaskensis).